Here is a 277-residue protein sequence, read N- to C-terminus: Pantothenate synthetase (277 aa).

Met-26–His-33 is an ATP binding site. Residue His-33 is the Proton donor of the active site. Position 57 (Gln-57) interacts with (R)-pantoate. Gln-57 serves as a coordination point for beta-alanine. Gly-144–Asp-147 contacts ATP. Residue Gln-150 coordinates (R)-pantoate. ATP is bound by residues Val-173 and Leu-181–Arg-184.

It belongs to the pantothenate synthetase family. In terms of assembly, homodimer.

It localises to the cytoplasm. It catalyses the reaction (R)-pantoate + beta-alanine + ATP = (R)-pantothenate + AMP + diphosphate + H(+). It functions in the pathway cofactor biosynthesis; (R)-pantothenate biosynthesis; (R)-pantothenate from (R)-pantoate and beta-alanine: step 1/1. Functionally, catalyzes the condensation of pantoate with beta-alanine in an ATP-dependent reaction via a pantoyl-adenylate intermediate. This Paraburkholderia phymatum (strain DSM 17167 / CIP 108236 / LMG 21445 / STM815) (Burkholderia phymatum) protein is Pantothenate synthetase.